The sequence spans 89 residues: Small ribosomal subunit protein bS20 (89 aa).

Residues 1–25 (MANTPQSKKRARQLERRTAVNKARR) are disordered.

The protein belongs to the bacterial ribosomal protein bS20 family.

Its function is as follows. Binds directly to 16S ribosomal RNA. The chain is Small ribosomal subunit protein bS20 from Paracoccus denitrificans (strain Pd 1222).